Here is a 194-residue protein sequence, read N- to C-terminus: dTTP/UTP pyrophosphatase (194 aa).

The Proton acceptor role is filled by Asp66.

This sequence belongs to the Maf family. YhdE subfamily. A divalent metal cation is required as a cofactor.

It is found in the cytoplasm. It carries out the reaction dTTP + H2O = dTMP + diphosphate + H(+). It catalyses the reaction UTP + H2O = UMP + diphosphate + H(+). Functionally, nucleoside triphosphate pyrophosphatase that hydrolyzes dTTP and UTP. May have a dual role in cell division arrest and in preventing the incorporation of modified nucleotides into cellular nucleic acids. The protein is dTTP/UTP pyrophosphatase of Anaeromyxobacter dehalogenans (strain 2CP-C).